Reading from the N-terminus, the 81-residue chain is Cytochrome c oxidase subunit 7B2, mitochondrial (81 aa).

The transit peptide at 1–25 directs the protein to the mitochondrion; the sequence is MMFPLARNALSSLKIQSILQSMARH. Residues 26–33 lie on the Mitochondrial matrix side of the membrane; that stretch reads SHVKHSPD. A helical membrane pass occupies residues 34-60; the sequence is FHDKYGNAVLASGTAFCVATWVFTATQ. The Mitochondrial intermembrane segment spans residues 61–81; that stretch reads IGIEWNLSPVGRVTPKEWKHQ.

Belongs to the cytochrome c oxidase VIIb family. As to quaternary structure, component of the cytochrome c oxidase (complex IV, CIV), a multisubunit enzyme composed of 14 subunits. The complex is composed of a catalytic core of 3 subunits MT-CO1, MT-CO2 and MT-CO3, encoded in the mitochondrial DNA, and 11 supernumerary subunits COX4I, COX5A, COX5B, COX6A, COX6B, COX6C, COX7A, COX7B, COX7C, COX8 and NDUFA4, which are encoded in the nuclear genome. The complex exists as a monomer or a dimer and forms supercomplexes (SCs) in the inner mitochondrial membrane with NADH-ubiquinone oxidoreductase (complex I, CI) and ubiquinol-cytochrome c oxidoreductase (cytochrome b-c1 complex, complex III, CIII), resulting in different assemblies (supercomplex SCI(1)III(2)IV(1) and megacomplex MCI(2)III(2)IV(2)).

Its subcellular location is the mitochondrion inner membrane. Its pathway is energy metabolism; oxidative phosphorylation. Its function is as follows. Component of the cytochrome c oxidase, the last enzyme in the mitochondrial electron transport chain which drives oxidative phosphorylation. The respiratory chain contains 3 multisubunit complexes succinate dehydrogenase (complex II, CII), ubiquinol-cytochrome c oxidoreductase (cytochrome b-c1 complex, complex III, CIII) and cytochrome c oxidase (complex IV, CIV), that cooperate to transfer electrons derived from NADH and succinate to molecular oxygen, creating an electrochemical gradient over the inner membrane that drives transmembrane transport and the ATP synthase. Cytochrome c oxidase is the component of the respiratory chain that catalyzes the reduction of oxygen to water. Electrons originating from reduced cytochrome c in the intermembrane space (IMS) are transferred via the dinuclear copper A center (CU(A)) of subunit 2 and heme A of subunit 1 to the active site in subunit 1, a binuclear center (BNC) formed by heme A3 and copper B (CU(B)). The BNC reduces molecular oxygen to 2 water molecules using 4 electrons from cytochrome c in the IMS and 4 protons from the mitochondrial matrix. The sequence is that of Cytochrome c oxidase subunit 7B2, mitochondrial (COX7B2) from Homo sapiens (Human).